The sequence spans 319 residues: tRNA-cytidine(32) 2-sulfurtransferase (319 aa).

The PP-loop motif motif lies at S43–S48. [4Fe-4S] cluster contacts are provided by C118, C121, and C209.

It belongs to the TtcA family. Homodimer. Mg(2+) is required as a cofactor. The cofactor is [4Fe-4S] cluster.

The protein localises to the cytoplasm. The enzyme catalyses cytidine(32) in tRNA + S-sulfanyl-L-cysteinyl-[cysteine desulfurase] + AH2 + ATP = 2-thiocytidine(32) in tRNA + L-cysteinyl-[cysteine desulfurase] + A + AMP + diphosphate + H(+). The protein operates within tRNA modification. Catalyzes the ATP-dependent 2-thiolation of cytidine in position 32 of tRNA, to form 2-thiocytidine (s(2)C32). The sulfur atoms are provided by the cysteine/cysteine desulfurase (IscS) system. This Neisseria meningitidis serogroup C (strain 053442) protein is tRNA-cytidine(32) 2-sulfurtransferase.